Consider the following 257-residue polypeptide: UPF0246 protein A1S_2267 (257 aa).

The protein belongs to the UPF0246 family.

The sequence is that of UPF0246 protein A1S_2267 from Acinetobacter baumannii (strain ATCC 17978 / DSM 105126 / CIP 53.77 / LMG 1025 / NCDC KC755 / 5377).